A 194-amino-acid polypeptide reads, in one-letter code: UPF0301 protein BPEN_258 (194 aa).

Belongs to the UPF0301 (AlgH) family.

The chain is UPF0301 protein BPEN_258 from Blochmanniella pennsylvanica (strain BPEN).